The sequence spans 189 residues: Dual specificity phosphatase 29 (189 aa).

The region spanning 33 to 182 is the Tyrosine-protein phosphatase domain; it reads HVNEVWPGVY…LRELDTHLQE (150 aa). Substrate is bound at residue 126–133; it reads HCVMGRSR. Cysteine 127 functions as the Phosphocysteine intermediate in the catalytic mechanism.

It belongs to the protein-tyrosine phosphatase family. Non-receptor class dual specificity subfamily.

The protein resides in the cytoplasm. Its subcellular location is the nucleus. It carries out the reaction O-phospho-L-tyrosyl-[protein] + H2O = L-tyrosyl-[protein] + phosphate. The enzyme catalyses O-phospho-L-seryl-[protein] + H2O = L-seryl-[protein] + phosphate. The catalysed reaction is O-phospho-L-threonyl-[protein] + H2O = L-threonyl-[protein] + phosphate. In terms of biological role, dual specificity phosphatase able to dephosphorylate phosphotyrosine, phosphoserine and phosphothreonine residues within the same substrate, with a preference for phosphotyrosine as a substrate. Involved in the modulation of AMPK and MAPK1/2 signaling pathways. The polypeptide is Dual specificity phosphatase 29 (dusp29) (Danio rerio (Zebrafish)).